We begin with the raw amino-acid sequence, 29 residues long: ATP synthase subunit 9, mitochondrial (29 aa).

It belongs to the ATPase C chain family. In terms of assembly, F-type ATPases have 2 components, CF(1) - the catalytic core - and CF(0) - the membrane proton channel. CF(1) has five subunits: alpha(3), beta(3), gamma(1), delta(1), epsilon(1). CF(0) has three main subunits: a, b and c.

The protein localises to the mitochondrion membrane. Its function is as follows. Mitochondrial membrane ATP synthase (F(1)F(0) ATP synthase or Complex V) produces ATP from ADP in the presence of a proton gradient across the membrane which is generated by electron transport complexes of the respiratory chain. F-type ATPases consist of two structural domains, F(1) - containing the extramembraneous catalytic core and F(0) - containing the membrane proton channel, linked together by a central stalk and a peripheral stalk. During catalysis, ATP synthesis in the catalytic domain of F(1) is coupled via a rotary mechanism of the central stalk subunits to proton translocation. Part of the complex F(0) domain. A homomeric c-ring of probably 10 subunits is part of the complex rotary element. The sequence is that of ATP synthase subunit 9, mitochondrial (ATP9) from Wickerhamomyces pijperi (Yeast).